We begin with the raw amino-acid sequence, 1395 residues long: uncharacterized protein (1395 aa).

ATP is bound at residue 89 to 96 (AYKKWGKS). Disordered regions lie at residues 146 to 166 (EEKI…LSPP) and 205 to 391 (SSSS…MENR). Low complexity-rich tracts occupy residues 155-166 (GSPSPEAELSPP) and 205-222 (SSSS…TSSP). Over residues 230–269 (EVTKERSSEVPTTVHEKTQSKSKNEKENKFSNGTIEEKPA) the composition is skewed to basic and acidic residues. Residues 287-301 (SWSSGSSEAGSSSSG) show a composition bias toward low complexity. Basic residues predominate over residues 313 to 328 (VKVRHKAREIRNKKGR). The segment covering 337–346 (KHGEKAERNI) has biased composition (basic and acidic residues). Over residues 349–358 (GSSSSSSSGS) the composition is skewed to low complexity. Residues 369–391 (PLKEIGRKDPGSTEGKDLYMENR) are compositionally biased toward basic and acidic residues. A phosphoserine mark is found at S814 and S1080. The disordered stretch occupies residues 1110 to 1132 (PISASELSPGGGSESEFESEKDE). Residues S1194 and S1338 each carry the phosphoserine modification. Over residues 1346 to 1359 (TGERDSGAKSDGFR) the composition is skewed to basic and acidic residues. Residues 1346–1395 (TGERDSGAKSDGFRGKMCSSASSTSEETGSEGGGEWVGPSEEELFSRTHL) form a disordered region.

This is an uncharacterized protein from Homo sapiens (Human).